An 83-amino-acid polypeptide reads, in one-letter code: Small ribosomal subunit protein eS21 (83 aa).

Belongs to the eukaryotic ribosomal protein eS21 family. In terms of assembly, component of the 40S small ribosomal subunit. Interacts with sta.

Its subcellular location is the cytoplasm. It localises to the cytosol. The protein resides in the rough endoplasmic reticulum. In terms of biological role, may be an associated component of the ribosome rather than a core structural subunit. May act as a translation initiation factor. Has a role in regulation of cell proliferation in the hematopoietic organs and the imaginal disks of larva. The protein is Small ribosomal subunit protein eS21 (RpS21) of Drosophila erecta (Fruit fly).